The chain runs to 77 residues: VpAmp2.0 (77 aa).

The N-terminal stretch at 1 to 23 is a signal peptide; it reads MQLRKALLVIFVAYLLVTDEAEA. Positions 49–77 are excised as a propeptide; that stretch reads RKREIEDLFDPYQKDLDLQRLDRFFSQFQ.

It belongs to the non-disulfide-bridged peptide (NDBP) superfamily. Medium-length antimicrobial peptide (group 3) family. In terms of tissue distribution, expressed by the venom gland.

It is found in the secreted. Its subcellular location is the target cell membrane. In terms of biological role, antimicrobial peptide with potent activity against Gram-positive bacteria S.aureus (MIC=10 uM) and S.agalactiaea (MIC=15 uM), and Gram-negative bacteria E.coli (MIC=24 uM) and P.aeruginosa (MIC=15 uM), as well as against yeasts Candida albicans (MIC=3.1 uM) and C.glabrata (MIC=25 uM). Also elicits low hemolysis on human erythrocytes (HC(50)=167 uM). In Mesomexovis punctatus (Scorpion), this protein is VpAmp2.0.